The primary structure comprises 316 residues: Polyprenyl transferase dpchC (316 aa).

The next 8 membrane-spanning stretches (helical) occupy residues 24-44 (PLFT…AKMA), 60-80 (ALCF…NDWI), 105-125 (EAMV…EVML), 154-174 (MLGI…AVIG), 192-212 (CLPL…AYSY), 234-254 (IHLL…IYLF), 258-278 (SLWL…QQLV), and 296-316 (FILG…TGSA).

This sequence belongs to the UbiA prenyltransferase family. It depends on Mg(2+) as a cofactor.

It localises to the membrane. It functions in the pathway secondary metabolite biosynthesis; terpenoid biosynthesis. Functionally, polyprenyl transferase; part of the gene cluster that mediates the biosynthesis of the diterpenoid pyrones higginsianins A and B. The first step of the pathway is the synthesis of the alpha-pyrone moiety by the polyketide synthase dpchA via condensation of one acetyl-CoA starter unit with 3 malonyl-CoA units and 2 methylations. The alpha-pyrone is then combined with geranylgeranyl pyrophosphate (GGPP) formed by the GGPP synthase dpchD through the action of the prenyltransferase dpchC to yield a linear alpha-pyrone diterpenoid. Subsequent steps in the diterpenoid pyrone biosynthetic pathway involve the decalin core formation, which is initiated by the epoxidation of the C10-C11 olefin by the FAD-dependent oxidoreductase dpchE, and is followed by a cyclization cascade catalyzed by the terpene cyclase dpchB. The short chain dehydrogenase/reductase dpchG then oxidizes the 8S hydroxy group to a ketone and the short chain dehydrogenase/reductase dpchH reduces the ketone to the 8R hydroxy group to yield higginsianin B. Finally, the FAD-dependent oxidoreductase dpchF converts higginsianin B into higginsianin A. The protein is Polyprenyl transferase dpchC of Colletotrichum higginsianum (strain IMI 349063) (Crucifer anthracnose fungus).